The sequence spans 155 residues: Small ribosomal subunit protein eS19B (155 aa).

Belongs to the eukaryotic ribosomal protein eS19 family.

The sequence is that of Small ribosomal subunit protein eS19B (RpS19b) from Drosophila melanogaster (Fruit fly).